Reading from the N-terminus, the 326-residue chain is Methyltransferase phqN (326 aa).

This sequence belongs to the class I-like SAM-binding methyltransferase superfamily. Erg6/SMT family.

The protein operates within alkaloid biosynthesis. Functionally, methyltransferase; part of the gene cluster that mediates the biosynthesis of paraherquamide, a fungal indole alkaloid that belongs to a family of natural products containing a characteristic bicyclo[2.2.2]diazaoctane core. The first steps in the biosynthesis of paraherquamide is the production of the beta-methyl-proline precursor from L-isoleucine. They require oxidation of a terminally hydroxylated L-isoleucine to the corresponding aldehyde by enzymes which have still to be identified. Spontaneous cyclization and dehydration would yield the 4-methyl pyrolline-5-carboxylic acid, which is then reduced by the pyrroline-5-carboxylate reductase phqD leading to the beta-methyl-proline precursor. The next step of paraherquamide biosynthesis involves coupling of beta-methyl-proline and L-tryptophan by the bimodular NRPS phqB, to produce a monooxopiperazine intermediate. The reductase (R) domain of phqB utilizes NADPH for hydride transfer to reduce the thioester bond of the T domain-tethered linear dipeptide to a hemithioaminal intermediate, which spontaneously cleaves the C-S bond to release the aldehyde product. This compound undergoes spontaneous cyclization and dehydration to give a dienamine which is reverse prenylated at C-2 by the reverse prenyltransferase phqJ. The other prenyltransferase present in the cluster, phqI may be a redundant gene in the pathway. During biosynthetic assembly, the key step to produce the polycyclic core is catalyzed by the bifunctional reductase and intramolecular [4+2] Diels-Alderase, phqE, resulting in formation of the [2.2.2] diazaoctane intermediate preparaherquamide. Following formation of preparaherquamide, an indole 2,3-epoxidation-initiated pinacol-like rearrangement is catalyzed by the phqK FAD-dependent monooxygenase. The prenyltransferase phqA, the cytochrome P450 monooxygenase phqL, and the FAD-linked oxidoreductase phqH (or the cytochrome P450 monooxygenase phqM), are proposed to be involved in the formation of the pyran ring. The FAD-dependent monooxygenase phqK is likely responsible for generation of the spiro-oxindole, and the N-methylation is likely mediated by the phqN methyltransferase leading to the isolable natural product paraherquamide F. However, the order of these biosynthetic steps has still to be determined. In late-stage paraherquamide biosynthesis, the third P450 monooxygenase, phqO, is probably responsible for the C-14 hydroxylation, transforming paraherquamide F to paraherquamide G, and paraherquamide E to the final product paraherquamide A. The expansion from the 6-membered ring pyran (in paraherquamides F and G) to the 7-membered dioxepin ring (in paraherquamides A and E) represents a poorly understood but intriguing process that probably involves the 2-oxoglutarate-dependent dioxygenase phqC. Finally, the remaining members of the paraherquamide cluster, including phqI as well as phqM (or phqH), do not have a clearly prescribed role and appear to be redundant. The sequence is that of Methyltransferase phqN from Penicillium fellutanum.